The following is a 137-amino-acid chain: Small ribosomal subunit protein uS9c (137 aa).

This sequence belongs to the universal ribosomal protein uS9 family.

It is found in the plastid. It localises to the chloroplast. This chain is Small ribosomal subunit protein uS9c (rps9), found in Gracilaria tenuistipitata var. liui (Red alga).